Reading from the N-terminus, the 103-residue chain is UPF0145 protein Rsph17025_2361 (103 aa).

It belongs to the UPF0145 family.

This is UPF0145 protein Rsph17025_2361 from Cereibacter sphaeroides (strain ATCC 17025 / ATH 2.4.3) (Rhodobacter sphaeroides).